A 431-amino-acid polypeptide reads, in one-letter code: Serine--tRNA ligase (431 aa).

237–239 is an L-serine binding site; the sequence is TAE. 268–270 lines the ATP pocket; sequence RSE. L-serine is bound at residue glutamate 291. 355–358 is a binding site for ATP; sequence EISS. Position 390 (serine 390) interacts with L-serine.

It belongs to the class-II aminoacyl-tRNA synthetase family. Type-1 seryl-tRNA synthetase subfamily. Homodimer. The tRNA molecule binds across the dimer.

It is found in the cytoplasm. The catalysed reaction is tRNA(Ser) + L-serine + ATP = L-seryl-tRNA(Ser) + AMP + diphosphate + H(+). It catalyses the reaction tRNA(Sec) + L-serine + ATP = L-seryl-tRNA(Sec) + AMP + diphosphate + H(+). It participates in aminoacyl-tRNA biosynthesis; selenocysteinyl-tRNA(Sec) biosynthesis; L-seryl-tRNA(Sec) from L-serine and tRNA(Sec): step 1/1. Catalyzes the attachment of serine to tRNA(Ser). Is also able to aminoacylate tRNA(Sec) with serine, to form the misacylated tRNA L-seryl-tRNA(Sec), which will be further converted into selenocysteinyl-tRNA(Sec). The sequence is that of Serine--tRNA ligase from Neisseria meningitidis serogroup A / serotype 4A (strain DSM 15465 / Z2491).